The primary structure comprises 374 residues: Putative zinc metalloprotease R01501 (374 aa).

Histidine 26 provides a ligand contact to Zn(2+). Glutamate 27 is a catalytic residue. A Zn(2+)-binding site is contributed by histidine 30. The next 4 membrane-spanning stretches (helical) occupy residues 36-55, 112-134, 301-323, and 348-367; these read WSGI…LFGW, AATV…AVLF, VLNF…VPVL, and LAFR…AAWN. One can recognise a PDZ domain in the interval 126–199; the sequence is AIAIFAVLFS…LPITVRIERE (74 aa).

The protein belongs to the peptidase M50B family. Zn(2+) is required as a cofactor.

The protein resides in the cell inner membrane. The polypeptide is Putative zinc metalloprotease R01501 (Rhizobium meliloti (strain 1021) (Ensifer meliloti)).